The chain runs to 142 residues: Large ribosomal subunit protein uL13 (142 aa).

Belongs to the universal ribosomal protein uL13 family. As to quaternary structure, part of the 50S ribosomal subunit.

In terms of biological role, this protein is one of the early assembly proteins of the 50S ribosomal subunit, although it is not seen to bind rRNA by itself. It is important during the early stages of 50S assembly. The chain is Large ribosomal subunit protein uL13 from Herminiimonas arsenicoxydans.